A 428-amino-acid polypeptide reads, in one-letter code: Histone deacetylase 3 (428 aa).

The interval 3–316 (NRTAYFYDPD…WTFETSLLVE (314 aa)) is histone deacetylase. 3 residues coordinate 1D-myo-inositol 1,4,5,6-tetrakisphosphate: His17, Gly21, and Lys25. Residue His135 is part of the active site. Zn(2+) contacts are provided by Asp170, His172, and Asp259. Arg265 lines the 1D-myo-inositol 1,4,5,6-tetrakisphosphate pocket. The segment at 381–428 (PSDLLSYERPDEADPEERGSEENFSRPEAANEFYDGDHDHDKESDVEI) is disordered. Composition is skewed to basic and acidic residues over residues 386 to 405 (SYER…ENFS) and 415 to 428 (DGDH…DVEI).

Belongs to the histone deacetylase family. HD type 1 subfamily.

Its subcellular location is the nucleus. The protein resides in the chromosome. The protein localises to the cytoplasm. It is found in the cytosol. It catalyses the reaction N(6)-acetyl-L-lysyl-[histone] + H2O = L-lysyl-[histone] + acetate. The enzyme catalyses N(6)-acetyl-L-lysyl-[protein] + H2O = L-lysyl-[protein] + acetate. The catalysed reaction is N(6)-(2E)-butenoyl-L-lysyl-[protein] + H2O = (2E)-2-butenoate + L-lysyl-[protein]. It carries out the reaction N(6)-(2-hydroxyisobutanoyl)-L-lysyl-[protein] + H2O = 2-hydroxy-2-methylpropanoate + L-lysyl-[protein]. It catalyses the reaction N(6)-[(S)-lactoyl]-L-lysyl-[protein] + H2O = (S)-lactate + L-lysyl-[protein]. Its activity is regulated as follows. Inositol tetraphosphate (1D-myo-inositol 1,4,5,6-tetrakisphosphate) promotes the histone deacetylase activity by acting as an intermolecular glue between hdac3 and N-Cor repressor complex components. Its function is as follows. Histone deacetylase that catalyzes the deacetylation of lysine residues on the N-terminal part of the core histones (H2A, H2B, H3 and H4), and some other non-histone substrates. Histone deacetylation gives a tag for epigenetic repression and plays an important role in transcriptional regulation, cell cycle progression and developmental events. Histone deacetylases act via the formation of large multiprotein complexes, such as N-Cor repressor complex, which activate the histone deacetylase activity. Participates in the BCL6 transcriptional repressor activity by deacetylating the H3 'Lys-27' (H3K27) on enhancer elements, antagonizing EP300 acetyltransferase activity and repressing proximal gene expression. Also functions as a deacetylase for non-histone targets. In addition to protein deacetylase activity, also acts as a protein-lysine deacylase by recognizing other acyl groups: catalyzes removal of (2E)-butenoyl (crotonyl), lactoyl (lactyl) and 2-hydroxyisobutanoyl (2-hydroxyisobutyryl) acyl groups from lysine residues, leading to protein decrotonylation, delactylation and de-2-hydroxyisobutyrylation, respectively. In Danio rerio (Zebrafish), this protein is Histone deacetylase 3 (hdac3).